We begin with the raw amino-acid sequence, 240 residues long: Myogenic factor 6 (240 aa).

The region spanning 91–142 is the bHLH domain; that stretch reads DRRKAATLRERRRLKKINEAFEALKRRTVANPNQRLPKVEILRSAINYIERL.

As to quaternary structure, efficient DNA binding requires dimerization with another bHLH protein. In terms of tissue distribution, skeletal muscle.

It localises to the nucleus. Its function is as follows. Involved in muscle differentiation (myogenic factor). Induces fibroblasts to differentiate into myoblasts. Probable sequence specific DNA-binding protein. This chain is Myogenic factor 6 (myf6), found in Xenopus laevis (African clawed frog).